The following is a 344-amino-acid chain: Biotin synthase (344 aa).

One can recognise a Radical SAM core domain in the interval 40 to 267; the sequence is AEVQVSTLLS…KSMVRLSAGR (228 aa). Cysteine 55, cysteine 59, and cysteine 62 together coordinate [4Fe-4S] cluster. Residues cysteine 99, cysteine 130, cysteine 190, and arginine 262 each contribute to the [2Fe-2S] cluster site.

The protein belongs to the radical SAM superfamily. Biotin synthase family. Homodimer. The cofactor is [4Fe-4S] cluster. It depends on [2Fe-2S] cluster as a cofactor.

The enzyme catalyses (4R,5S)-dethiobiotin + (sulfur carrier)-SH + 2 reduced [2Fe-2S]-[ferredoxin] + 2 S-adenosyl-L-methionine = (sulfur carrier)-H + biotin + 2 5'-deoxyadenosine + 2 L-methionine + 2 oxidized [2Fe-2S]-[ferredoxin]. It functions in the pathway cofactor biosynthesis; biotin biosynthesis; biotin from 7,8-diaminononanoate: step 2/2. Catalyzes the conversion of dethiobiotin (DTB) to biotin by the insertion of a sulfur atom into dethiobiotin via a radical-based mechanism. This is Biotin synthase from Xanthomonas campestris pv. campestris (strain 8004).